The primary structure comprises 434 residues: Glutamyl-tRNA reductase (434 aa).

Substrate is bound by residues 52–55 (TCNR), Ser-115, 120–122 (ETQ), and Gln-126. Catalysis depends on Cys-53, which acts as the Nucleophile. 195–200 (GAGEMI) serves as a coordination point for NADP(+).

It belongs to the glutamyl-tRNA reductase family. In terms of assembly, homodimer.

The catalysed reaction is (S)-4-amino-5-oxopentanoate + tRNA(Glu) + NADP(+) = L-glutamyl-tRNA(Glu) + NADPH + H(+). It participates in porphyrin-containing compound metabolism; protoporphyrin-IX biosynthesis; 5-aminolevulinate from L-glutamyl-tRNA(Glu): step 1/2. Functionally, catalyzes the NADPH-dependent reduction of glutamyl-tRNA(Glu) to glutamate 1-semialdehyde (GSA). The polypeptide is Glutamyl-tRNA reductase (Cupriavidus pinatubonensis (strain JMP 134 / LMG 1197) (Cupriavidus necator (strain JMP 134))).